An 847-amino-acid polypeptide reads, in one-letter code: Cancer-associated gene 1 protein homolog (847 aa).

The disordered stretch occupies residues 118–161; the sequence is EEKPELQSQVYNDPADASQKPDPLKEESLMESSTSENKDELVHE. Residues 377 to 567 are a coiled coil; sequence NVILEKNDIN…AAKREAQACT (191 aa).

The sequence is that of Cancer-associated gene 1 protein homolog (Cage1) from Rattus norvegicus (Rat).